The sequence spans 1882 residues: RNA2 polyprotein (1882 aa).

2 tandem repeats follow at residues 554 to 606 (SWSS…LPSF) and 607 to 659 (SWSS…LPSF). Positions 554–698 (SWSSPLPLFA…VSDEFMDVLP (145 aa)) are 2.5 X tandem repeats, Pro-rich. One copy of the 3; truncated and approximate repeat lies at 660 to 698 (SWSSPLPLFASFKVNRGACFLQVLPARKVVSDEFMDVLP). 2 stretches are compositionally biased toward polar residues: residues 1289–1303 (SSLF…QQGT) and 1838–1847 (PSATLGTNNP). Disordered stretches follow at residues 1289 to 1320 (SSLF…SSVQ) and 1838 to 1863 (PSAT…PGGQ).

This sequence belongs to the nepoviruses RNA2 polyprotein family. Post-translationally, specific enzymatic cleavages in vivo by the P1 encoded 3C-like protease yield mature proteins.

It localises to the host cell junction. Its subcellular location is the host plasmodesma. The protein localises to the virion. Its function is as follows. Protein 2A: implicated in RNA2 replication. Could also be required for nematode transmission of the virus. In terms of biological role, transports viral genome to neighboring plant cells directly through plasmosdesmata, without any budding. The movement protein allows efficient cell to cell propagation, by bypassing the host cell wall barrier. Acts by forming a tubular structure at the host plasmodesmata, enlarging it enough to allow free passage of virion capsids. The sequence is that of RNA2 polyprotein from Tomato ringspot virus (isolate raspberry) (ToRSV).